The chain runs to 476 residues: Bifunctional protein HldE (476 aa).

The segment at 1-319 (MKISLPAFEK…AALNLSHGES (319 aa)) is ribokinase. Residue 195 to 198 (NMSE) coordinates ATP. Aspartate 264 is a catalytic residue. A cytidylyltransferase region spans residues 345–476 (MTNGCFDILH…AIIENIMAKQ (132 aa)).

In the N-terminal section; belongs to the carbohydrate kinase PfkB family. The protein in the C-terminal section; belongs to the cytidylyltransferase family. Homodimer.

It carries out the reaction D-glycero-beta-D-manno-heptose 7-phosphate + ATP = D-glycero-beta-D-manno-heptose 1,7-bisphosphate + ADP + H(+). The catalysed reaction is D-glycero-beta-D-manno-heptose 1-phosphate + ATP + H(+) = ADP-D-glycero-beta-D-manno-heptose + diphosphate. It functions in the pathway nucleotide-sugar biosynthesis; ADP-L-glycero-beta-D-manno-heptose biosynthesis; ADP-L-glycero-beta-D-manno-heptose from D-glycero-beta-D-manno-heptose 7-phosphate: step 1/4. Its pathway is nucleotide-sugar biosynthesis; ADP-L-glycero-beta-D-manno-heptose biosynthesis; ADP-L-glycero-beta-D-manno-heptose from D-glycero-beta-D-manno-heptose 7-phosphate: step 3/4. Functionally, catalyzes the phosphorylation of D-glycero-D-manno-heptose 7-phosphate at the C-1 position to selectively form D-glycero-beta-D-manno-heptose-1,7-bisphosphate. In terms of biological role, catalyzes the ADP transfer from ATP to D-glycero-beta-D-manno-heptose 1-phosphate, yielding ADP-D-glycero-beta-D-manno-heptose. This is Bifunctional protein HldE from Shewanella loihica (strain ATCC BAA-1088 / PV-4).